The primary structure comprises 397 residues: Elongation factor Tu (397 aa).

In terms of domain architecture, tr-type G spans 10-206 (KPHVNIGTIG…AVDASIPEPE (197 aa)). The interval 19-26 (GHIDHGKT) is G1. 19 to 26 (GHIDHGKT) contributes to the GTP binding site. Residue Thr26 participates in Mg(2+) binding. A G2 region spans residues 62–66 (GITIS). Positions 83 to 86 (DCPG) are G3. GTP-binding positions include 83–87 (DCPGH) and 138–141 (NKAD). Residues 138–141 (NKAD) are G4. A G5 region spans residues 176–178 (SAL).

It belongs to the TRAFAC class translation factor GTPase superfamily. Classic translation factor GTPase family. EF-Tu/EF-1A subfamily. As to quaternary structure, monomer.

Its subcellular location is the cytoplasm. The catalysed reaction is GTP + H2O = GDP + phosphate + H(+). Its function is as follows. GTP hydrolase that promotes the GTP-dependent binding of aminoacyl-tRNA to the A-site of ribosomes during protein biosynthesis. This chain is Elongation factor Tu, found in Parafrankia sp. (strain EAN1pec).